We begin with the raw amino-acid sequence, 945 residues long: MLDKYNPAEIESKHYQNWEEQGYFQPDMDLTKPSFSIQLPPPNVTGTLHMGHAFNQTIMDGLTRYYRMKGCNTAWIPGTDHAGIATQIVVERQLAAQNVSRHDLGREKFLEKVWEWKEVSGGTITQQMRRVGCSADWTREYFTMDDVRAETVTEVFVRLYEQGLIYRGKRLVNWDPVLGTAVSDLEVESVEEQGSMWHIRYPLADNPAEAVIVATTRPETLLGDVAVAVNPEDERYTHLIGKELILPLTGRTIPVIADEYVEKDFGTGCVKITPAHDFNDYEVGKRHDTRLINVFNLEAKVLANAEVFNFKGEAQLGFALPEKYAGLDRFAARKQMVADLQEQGFLVEIKPHTLMTPKGDRTGSVIEPMLTSQWFVAMSATPNGGEPDSEFKGLSLADKAKKAVDSGAVRFIPENWVNTYNQWMNNIQDWCISRQLWWGHQIPAWYDNEGNVYVARNQEEAEKQAGKTGLTREEDVLDTWFSSALVPFSTLGWPSETDELKAFLPSNVLVTGYEIIFFWVARMIMMTTHFTGKVPFKDVYIHGIVRDHEGKKMSKSEGNVIDPVDLIDGIGLEKLLVKRTTGLRKPETAPKVEEATKKLFPEGIPSMGADALRFTMASYASLGRSVNFDFKRAEGYRNFCNKIWNATNFVLMNTENQDCGYGATAAEPRGYSFPDMWIVGRLNQTIEQVTQAYETYRFDLAAETLYSFVWNDYCDWYLELAKVQLQTGCASRQRATRHTLLRVLEAALRLLHPIIPFITEELWQTVAPMCDAKTADSIMLARFPEADSGEIVQTAFEQMTVLQDLIGAVRNLRGEMGIQPNVKAPLFVESTDDLADYLKYLPMMTRLTEAQQVAALPESEDAPVAVCNGARLMLKVEIDKAAETARLSKEAEKLQKALDKLNAKLSKPGYTEKAPAHLVEKDKADLAELEDKMAKVQNQLAKLKD.

Residues 42–52 (PNVTGTLHMGH) carry the 'HIGH' region motif. The 'KMSKS' region motif lies at 552 to 556 (KMSKS). K555 contacts ATP. The stretch at 879-945 (DKAAETARLS…VQNQLAKLKD (67 aa)) forms a coiled coil.

It belongs to the class-I aminoacyl-tRNA synthetase family. ValS type 1 subfamily. As to quaternary structure, monomer.

It is found in the cytoplasm. It catalyses the reaction tRNA(Val) + L-valine + ATP = L-valyl-tRNA(Val) + AMP + diphosphate. Its function is as follows. Catalyzes the attachment of valine to tRNA(Val). As ValRS can inadvertently accommodate and process structurally similar amino acids such as threonine, to avoid such errors, it has a 'posttransfer' editing activity that hydrolyzes mischarged Thr-tRNA(Val) in a tRNA-dependent manner. The sequence is that of Valine--tRNA ligase from Neisseria meningitidis serogroup B (strain ATCC BAA-335 / MC58).